We begin with the raw amino-acid sequence, 278 residues long: Multidrug-efflux transporter 1 regulator (278 aa).

The HTH merR-type domain occupies 5–75 (YYSIGEVSKL…LEEMKKAQDL (71 aa)). Positions 8–27 (IGEVSKLANVSIKALRYYDK) form a DNA-binding region, H-T-H motif.

In terms of assembly, binds DNA as a homodimer.

In terms of biological role, activates transcription of the bmr gene in response to structurally dissimilar drugs. Binds rhodamine as an inducer. In Bacillus subtilis (strain 168), this protein is Multidrug-efflux transporter 1 regulator (bmrR).